Here is a 662-residue protein sequence, read N- to C-terminus: Probable dolichyl-phosphate-mannose--protein mannosyltransferase 7 (662 aa).

Topologically, residues 1–26 (MKDLRLQGPYRKYIPYNIFQQCGIGH) are lumenal. Residues 27–47 (LKTLDYIFAFLIVITNFTLIW) traverse the membrane as a helical segment. Residues 48-159 (KSHSSSFWNR…GTIISFDSLE (112 aa)) are Cytoplasmic-facing. Residues 160–180 (WCLFSVVIYSFISISIAKLGT) form a helical membrane-spanning segment. Residues 181-195 (TNWFANVITLSISLG) lie on the Lumenal side of the membrane. The chain crosses the membrane as a helical span at residues 196 to 216 (LAISSKFIGIVTWAFVILSFV). Topologically, residues 217–235 (RQFDRLISDVKVTTIQIIK) are cytoplasmic. Residues 236-256 (FVILCLLFVLIIPGSIFIISY) traverse the membrane as a helical segment. Residues 257–482 (SNLLSNFKTD…MEYPVIPRTT (226 aa)) are Lumenal-facing. Residues 289–344 (PSRLYYGSTITLRHLDSMVGYLASHDISYPSDVDEQLVALSFEEFAADNEWLIEHP) enclose the MIR 1 domain. N-linked (GlcNAc...) asparagine glycosylation is present at Asn347. MIR domains are found at residues 359–418 (LIPV…VLLI) and 432–488 (DKYI…IDSV). A helical membrane pass occupies residues 483-503 (FLIDSVQLPVDFQVPMIEYYI). At 504–565 (GKISSSAEFN…KWPITLDTDS (62 aa)) the chain is on the cytoplasmic side. A helical membrane pass occupies residues 566-586 (PVWFNFAWYGSLLSMIIFMCV). The Lumenal portion of the chain corresponds to 587–617 (QCKRMISWNPWTTAEPSFSIKWEVYNEFGWE). Residues 618–638 (CIVGWFLHFYIFTMSPHFNLG) form a helical membrane-spanning segment. Residues 639 to 662 (KKLYFQSFFFSVLCLLESLDCLAK) are Cytoplasmic-facing.

The protein belongs to the glycosyltransferase 39 family.

The protein localises to the endoplasmic reticulum membrane. It carries out the reaction a di-trans,poly-cis-dolichyl beta-D-mannosyl phosphate + L-seryl-[protein] = 3-O-(alpha-D-mannosyl)-L-seryl-[protein] + a di-trans,poly-cis-dolichyl phosphate + H(+). It catalyses the reaction a di-trans,poly-cis-dolichyl beta-D-mannosyl phosphate + L-threonyl-[protein] = 3-O-(alpha-D-mannosyl)-L-threonyl-[protein] + a di-trans,poly-cis-dolichyl phosphate + H(+). The protein operates within protein modification; protein glycosylation. Its function is as follows. Probable protein O-mannosyltransferase involved in O-glycosylation which is essential for cell wall rigidity. Transfers mannose from Dol-P-mannose to Ser or Thr residues on proteins. The polypeptide is Probable dolichyl-phosphate-mannose--protein mannosyltransferase 7 (Saccharomyces cerevisiae (strain ATCC 204508 / S288c) (Baker's yeast)).